A 506-amino-acid chain; its full sequence is Bone morphogenetic protein 6 (506 aa).

The first 20 residues, 1 to 20 (MPGLGRRAQWLCWWWGLLCS), serve as a signal peptide directing secretion. A propeptide spanning residues 21–367 (CGPPPLRPPL…VSEVHVRTTR (347 aa)) is cleaved from the precursor. Disordered stretches follow at residues 44–64 (AGGS…SGFL), 87–125 (PHRP…RLKS), and 139–195 (KDDE…PLTS). Residues 96 to 112 (LQQPQSPVLPQQQQSQQ) are compositionally biased toward low complexity. Acidic residues predominate over residues 140–153 (DDEEDGVSEGEGLE). 5 N-linked (GlcNAc...) asparagine glycosylation sites follow: Asn-234, Asn-262, Asn-379, Asn-397, and Asn-447. The segment at 366–397 (TRSASSRRRQQSRNRSTQSQDVSRGSSASDYN) is disordered. The segment covering 386–397 (DVSRGSSASDYN) has biased composition (polar residues). 3 cysteine pairs are disulfide-bonded: Cys-405/Cys-471, Cys-434/Cys-503, and Cys-438/Cys-505.

It belongs to the TGF-beta family. In terms of assembly, interacts with SOSTDC1. Interacts (when glycosylated) with type I receptor ACVR1; the interaction may induce HAMP expression. Interacts with type II receptor ACVR2B. Interacts with Hemojuvelin/HJV. Interacts with ERFE; the interaction inhibits BMP-induced transcription of HAMP. Interacts with BMPR1A/ALK3. Forms heterodimers with BMP2 in vitro; the heterodimer then binds to its receptor BMPR1A /ALK3 and may induce HAMP expression.

Its subcellular location is the secreted. Functionally, growth factor of the TGF-beta superfamily that plays essential roles in many developmental processes including cartilage and bone formation. Also plays an important role in the regulation of HAMP/hepcidin expression and iron metabolism by acting as a ligand for hemojuvelin/HJV. Also acts to promote expression of HAMP, potentially via the interaction with its receptor BMPR1A/ALK3. Initiates the canonical BMP signaling cascade by associating with type I receptor ACVR1 and type II receptor ACVR2B. In turn, ACVR1 propagates signal by phosphorylating SMAD1/5/8 that travel to the nucleus and act as activators and repressors of transcription of target. Can also signal through non-canonical pathway such as TAZ-Hippo signaling cascade to modulate VEGF signaling by regulating VEGFR2 expression. This Rattus norvegicus (Rat) protein is Bone morphogenetic protein 6 (Bmp6).